Consider the following 382-residue polypeptide: Inactive anthranilate O-methyltransferase 1 (382 aa).

S-adenosyl-L-homocysteine contacts are provided by Y20, C61, N66, D102, L103, S146, and Y147. Mg(2+) is bound by residues E268 and F270.

It belongs to the methyltransferase superfamily. Type-7 methyltransferase family. SABATH subfamily.

This Zea mays (Maize) protein is Inactive anthranilate O-methyltransferase 1 (AAMT1I).